Reading from the N-terminus, the 259-residue chain is tRNA (guanine-N(7)-)-methyltransferase (259 aa).

A disordered region spans residues 1-73 (MGHHGQMHAQ…GPAEDPDRPG (73 aa)). S-adenosyl-L-methionine is bound by residues E91, E116, N143, and D166. D166 is an active-site residue. Substrate is bound by residues K170, D202, and 238-241 (TKYE).

It belongs to the class I-like SAM-binding methyltransferase superfamily. TrmB family.

The catalysed reaction is guanosine(46) in tRNA + S-adenosyl-L-methionine = N(7)-methylguanosine(46) in tRNA + S-adenosyl-L-homocysteine. It participates in tRNA modification; N(7)-methylguanine-tRNA biosynthesis. Functionally, catalyzes the formation of N(7)-methylguanine at position 46 (m7G46) in tRNA. In Mycolicibacterium paratuberculosis (strain ATCC BAA-968 / K-10) (Mycobacterium paratuberculosis), this protein is tRNA (guanine-N(7)-)-methyltransferase.